A 231-amino-acid polypeptide reads, in one-letter code: Ribose-5-phosphate isomerase A (231 aa).

Residues 23-26 (SGST), 80-83 (DGAD), and 93-96 (KGGG) contribute to the substrate site. The Proton acceptor role is filled by glutamate 102. Residue lysine 120 participates in substrate binding.

Belongs to the ribose 5-phosphate isomerase family. In terms of assembly, homodimer.

The enzyme catalyses aldehydo-D-ribose 5-phosphate = D-ribulose 5-phosphate. The protein operates within carbohydrate degradation; pentose phosphate pathway; D-ribose 5-phosphate from D-ribulose 5-phosphate (non-oxidative stage): step 1/1. Catalyzes the reversible conversion of ribose-5-phosphate to ribulose 5-phosphate. This is Ribose-5-phosphate isomerase A from Prochlorococcus marinus subsp. pastoris (strain CCMP1986 / NIES-2087 / MED4).